The following is a 413-amino-acid chain: Tyrosine--tRNA ligase (413 aa).

The 'HIGH' region motif lies at 59 to 68; the sequence is PTAPDIHIGH. Residues 243–247 carry the 'KMSKS' region motif; that stretch reads KMSKS. Residue lysine 246 participates in ATP binding. Residues 351 to 411 form the S4 RNA-binding domain; it reads LAIGQLLKQA…GKRRFARVTL (61 aa).

This sequence belongs to the class-I aminoacyl-tRNA synthetase family. TyrS type 2 subfamily. In terms of assembly, homodimer.

The protein localises to the cytoplasm. The enzyme catalyses tRNA(Tyr) + L-tyrosine + ATP = L-tyrosyl-tRNA(Tyr) + AMP + diphosphate + H(+). In terms of biological role, catalyzes the attachment of tyrosine to tRNA(Tyr) in a two-step reaction: tyrosine is first activated by ATP to form Tyr-AMP and then transferred to the acceptor end of tRNA(Tyr). The sequence is that of Tyrosine--tRNA ligase from Burkholderia lata (strain ATCC 17760 / DSM 23089 / LMG 22485 / NCIMB 9086 / R18194 / 383).